Reading from the N-terminus, the 206-residue chain is Orotate phosphoribosyltransferase (206 aa).

5-phospho-alpha-D-ribose 1-diphosphate-binding positions include Lys-26, 72–73 (YK), Arg-99, Lys-100, Lys-103, His-105, and 124–132 (DDVMTSGFS). Orotate contacts are provided by Thr-128 and Arg-157.

This sequence belongs to the purine/pyrimidine phosphoribosyltransferase family. PyrE subfamily. In terms of assembly, homodimer. It depends on Mg(2+) as a cofactor.

The enzyme catalyses orotidine 5'-phosphate + diphosphate = orotate + 5-phospho-alpha-D-ribose 1-diphosphate. It functions in the pathway pyrimidine metabolism; UMP biosynthesis via de novo pathway; UMP from orotate: step 1/2. Catalyzes the transfer of a ribosyl phosphate group from 5-phosphoribose 1-diphosphate to orotate, leading to the formation of orotidine monophosphate (OMP). The polypeptide is Orotate phosphoribosyltransferase (Buchnera aphidicola subsp. Baizongia pistaciae (strain Bp)).